A 45-amino-acid chain; its full sequence is Gene 78 protein (45 aa).

Residues methionine 1–leucine 14 are compositionally biased toward basic and acidic residues. Residues methionine 1 to tyrosine 45 are disordered. The span at histidine 23–lysine 35 shows a compositional bias: basic residues.

This is Gene 78 protein (78) from Mycobacterium phage L5 (Mycobacteriophage L5).